Reading from the N-terminus, the 254-residue chain is 5'/3'-nucleotidase SurE (254 aa).

A divalent metal cation contacts are provided by Asp-9, Asp-10, Ser-40, and Asn-93.

It belongs to the SurE nucleotidase family. A divalent metal cation is required as a cofactor.

It localises to the cytoplasm. The catalysed reaction is a ribonucleoside 5'-phosphate + H2O = a ribonucleoside + phosphate. The enzyme catalyses a ribonucleoside 3'-phosphate + H2O = a ribonucleoside + phosphate. It catalyses the reaction [phosphate](n) + H2O = [phosphate](n-1) + phosphate + H(+). In terms of biological role, nucleotidase with a broad substrate specificity as it can dephosphorylate various ribo- and deoxyribonucleoside 5'-monophosphates and ribonucleoside 3'-monophosphates with highest affinity to 3'-AMP. Also hydrolyzes polyphosphate (exopolyphosphatase activity) with the preference for short-chain-length substrates (P20-25). Might be involved in the regulation of dNTP and NTP pools, and in the turnover of 3'-mononucleotides produced by numerous intracellular RNases (T1, T2, and F) during the degradation of various RNAs. This chain is 5'/3'-nucleotidase SurE, found in Proteus mirabilis (strain HI4320).